We begin with the raw amino-acid sequence, 1610 residues long: Adenylate cyclase type 10 (1610 aa).

Guanylate cyclase domains lie at 42-179 and 293-418; these read VLMF…RLAQ and TIVF…ARMM. The Mg(2+) site is built by D47 and I48. An ATP-binding site is contributed by 47 to 52; the sequence is DISGFT. K95 is a binding site for hydrogencarbonate. D99 serves as a coordination point for Mg(2+). Positions 99 and 144 each coordinate ATP. Hydrogencarbonate is bound by residues V167, R176, and M337. Residues V406 and 412-416 each bind ATP; that span reads NIAAR.

It belongs to the adenylyl cyclase class-4/guanylyl cyclase family. It depends on Mg(2+) as a cofactor. Mn(2+) serves as cofactor.

The protein resides in the cell membrane. Its subcellular location is the cytoplasm. It localises to the cytoskeleton. The protein localises to the perinuclear region. It is found in the nucleus. The protein resides in the cell projection. Its subcellular location is the cilium. The catalysed reaction is ATP = 3',5'-cyclic AMP + diphosphate. Its activity is regulated as follows. Activated by manganese or magnesium ions. In the presence of magnesium ions, the enzyme is activated by bicarbonate. Calcium mildly increases the enzyme activity, also in the presence of magnesium ions. Functionally, catalyzes the formation of the signaling molecule cAMP. May function as sensor that mediates responses to changes in cellular bicarbonate and CO(2) levels. Has a critical role in mammalian spermatogenesis by producing the cAMP which regulates cAMP-responsive nuclear factors indispensable for sperm maturation in the epididymis. Induces capacitation, the maturational process that sperm undergo prior to fertilization. Involved in ciliary beat regulation. The protein is Adenylate cyclase type 10 (ADCY10) of Oryctolagus cuniculus (Rabbit).